A 193-amino-acid chain; its full sequence is dCTP deaminase (193 aa).

DCTP is bound by residues 110-115 (RSSLAR), Asp-128, 136-138 (VLE), Tyr-171, Lys-178, and Gln-182. Glu-138 acts as the Proton donor/acceptor in catalysis. Residues 169-193 (RPYNRREDAKYRNQQGAVASRIDKD) form a disordered region.

This sequence belongs to the dCTP deaminase family. Homotrimer.

It carries out the reaction dCTP + H2O + H(+) = dUTP + NH4(+). It participates in pyrimidine metabolism; dUMP biosynthesis; dUMP from dCTP (dUTP route): step 1/2. Its function is as follows. Catalyzes the deamination of dCTP to dUTP. This chain is dCTP deaminase, found in Escherichia coli O8 (strain IAI1).